The primary structure comprises 236 residues: Phosphoribosylaminoimidazole-succinocarboxamide synthase (236 aa).

Belongs to the SAICAR synthetase family.

It carries out the reaction 5-amino-1-(5-phospho-D-ribosyl)imidazole-4-carboxylate + L-aspartate + ATP = (2S)-2-[5-amino-1-(5-phospho-beta-D-ribosyl)imidazole-4-carboxamido]succinate + ADP + phosphate + 2 H(+). Its pathway is purine metabolism; IMP biosynthesis via de novo pathway; 5-amino-1-(5-phospho-D-ribosyl)imidazole-4-carboxamide from 5-amino-1-(5-phospho-D-ribosyl)imidazole-4-carboxylate: step 1/2. The polypeptide is Phosphoribosylaminoimidazole-succinocarboxamide synthase (Akkermansia muciniphila (strain ATCC BAA-835 / DSM 22959 / JCM 33894 / BCRC 81048 / CCUG 64013 / CIP 107961 / Muc)).